A 165-amino-acid chain; its full sequence is Large ribosomal subunit protein uL30 (165 aa).

This sequence belongs to the universal ribosomal protein uL30 family. In terms of assembly, part of the 50S ribosomal subunit.

The polypeptide is Large ribosomal subunit protein uL30 (Thermoplasma volcanium (strain ATCC 51530 / DSM 4299 / JCM 9571 / NBRC 15438 / GSS1)).